Consider the following 377-residue polypeptide: Probable tRNA pseudouridine synthase D (377 aa).

The active-site Nucleophile is the D89. Positions 160 to 377 (YLPAFIGYQR…ILRGDPRKFT (218 aa)) constitute a TRUD domain.

The protein belongs to the pseudouridine synthase TruD family.

The catalysed reaction is uridine(13) in tRNA = pseudouridine(13) in tRNA. Its function is as follows. Could be responsible for synthesis of pseudouridine from uracil-13 in transfer RNAs. This is Probable tRNA pseudouridine synthase D from Saccharolobus solfataricus (strain ATCC 35092 / DSM 1617 / JCM 11322 / P2) (Sulfolobus solfataricus).